A 349-amino-acid chain; its full sequence is Protein pelota homolog (349 aa).

This sequence belongs to the eukaryotic release factor 1 family. Pelota subfamily. As to quaternary structure, monomer. A divalent metal cation is required as a cofactor.

It is found in the cytoplasm. May function in recognizing stalled ribosomes, interact with stem-loop structures in stalled mRNA molecules, and effect endonucleolytic cleavage of the mRNA. May play a role in the release non-functional ribosomes and degradation of damaged mRNAs. Has endoribonuclease activity. The protein is Protein pelota homolog of Nitrosopumilus maritimus (strain SCM1).